Here is a 140-residue protein sequence, read N- to C-terminus: L-fucose mutarotase (140 aa).

The Proton donor role is filled by His-22. Substrate contacts are provided by residues Asp-30, Arg-107, and 129-131; that span reads YGN.

This sequence belongs to the RbsD / FucU family. FucU mutarotase subfamily. Homodecamer.

Its subcellular location is the cytoplasm. It carries out the reaction alpha-L-fucose = beta-L-fucose. It functions in the pathway carbohydrate metabolism; L-fucose metabolism. Functionally, involved in the anomeric conversion of L-fucose. The sequence is that of L-fucose mutarotase from Salmonella paratyphi B (strain ATCC BAA-1250 / SPB7).